The sequence spans 540 residues: MRVNKSLTPQDLMAYGINDVQDIVYNPSYDLLFQEELDPNLKGYERGVLTNLGAVAVDTGVFTGRSPKDKYIVRDDTTRDTFWWADKGKGKNDNKPLSPETWQHLKGLVTNQLSGKRLFVVDAFCGANADTRLSVRFITEVAWQAHFVKNMFIRPTDEELVDFEPDFIVMNGAKCTNPQWKEQGLNSENFVAFNLTERMQLIGGTWYGGEMKKGMFSMMNYLLPLKGIASMHCSANVGEKGDVAVFFGLSGTGKTTLSTDPKRRLIGDDEHGWDDDGVFNFEGGCYAKTIKLSKEAEPEIYNAIRRDALLENVTVREDGTIDFDDGSKTENTRVSYPIYHIDNIVKPVSKAGHATKVIFLTADAFGVLPPVSRLTADQTQYHFLSGFTAKLAGTERGITEPTPTFSACFGAAFLSLHPTQYAEVLVKRMQAAGAQAYLVNTGWNGTGKRISIKDTRAIIDAILNGSLDNAETFTLPMFNLAIPTELPGVDTKILDPRNTYASSEQWQEKAETLAKLFIDNFDKYTDTPAGAALVEAGPKL.

Arg-65 is a binding site for substrate. Lys-87 carries the post-translational modification N6-acetyllysine. 2 residues coordinate substrate: Tyr-207 and Lys-213. Residues Lys-213, His-232, and Gly-248 to Thr-256 contribute to the ATP site. Mn(2+) is bound by residues Lys-213 and His-232. Asp-269 lines the Mn(2+) pocket. ATP is bound by residues Glu-297, Arg-333, Arg-449–Ile-450, and Thr-455. Arg-333 serves as a coordination point for substrate. N6-acetyllysine is present on Lys-523.

Belongs to the phosphoenolpyruvate carboxykinase (ATP) family. As to quaternary structure, monomer. It depends on Mn(2+) as a cofactor.

Its subcellular location is the cytoplasm. It carries out the reaction oxaloacetate + ATP = phosphoenolpyruvate + ADP + CO2. It functions in the pathway carbohydrate biosynthesis; gluconeogenesis. Functionally, involved in the gluconeogenesis. Catalyzes the conversion of oxaloacetate (OAA) to phosphoenolpyruvate (PEP) through direct phosphoryl transfer between the nucleoside triphosphate and OAA. This Escherichia fergusonii (strain ATCC 35469 / DSM 13698 / CCUG 18766 / IAM 14443 / JCM 21226 / LMG 7866 / NBRC 102419 / NCTC 12128 / CDC 0568-73) protein is Phosphoenolpyruvate carboxykinase (ATP).